The primary structure comprises 200 residues: Holliday junction branch migration complex subunit RuvA (200 aa).

Residues Met1–Ala63 are domain I. The tract at residues Asp64–Ala138 is domain II. The interval Ala138–Pro142 is flexible linker. The tract at residues Val143–Gly200 is domain III.

The protein belongs to the RuvA family. As to quaternary structure, homotetramer. Forms an RuvA(8)-RuvB(12)-Holliday junction (HJ) complex. HJ DNA is sandwiched between 2 RuvA tetramers; dsDNA enters through RuvA and exits via RuvB. An RuvB hexamer assembles on each DNA strand where it exits the tetramer. Each RuvB hexamer is contacted by two RuvA subunits (via domain III) on 2 adjacent RuvB subunits; this complex drives branch migration. In the full resolvosome a probable DNA-RuvA(4)-RuvB(12)-RuvC(2) complex forms which resolves the HJ.

The protein localises to the cytoplasm. In terms of biological role, the RuvA-RuvB-RuvC complex processes Holliday junction (HJ) DNA during genetic recombination and DNA repair, while the RuvA-RuvB complex plays an important role in the rescue of blocked DNA replication forks via replication fork reversal (RFR). RuvA specifically binds to HJ cruciform DNA, conferring on it an open structure. The RuvB hexamer acts as an ATP-dependent pump, pulling dsDNA into and through the RuvAB complex. HJ branch migration allows RuvC to scan DNA until it finds its consensus sequence, where it cleaves and resolves the cruciform DNA. The protein is Holliday junction branch migration complex subunit RuvA of Beutenbergia cavernae (strain ATCC BAA-8 / DSM 12333 / CCUG 43141 / JCM 11478 / NBRC 16432 / NCIMB 13614 / HKI 0122).